We begin with the raw amino-acid sequence, 442 residues long: D-galactonate dehydratase family member SSBG_02010 (442 aa).

Residue D246 coordinates Mg(2+). H248 contributes to the D-arabinonate binding site. Residues E272 and E298 each contribute to the Mg(2+) site. D-arabinonate contacts are provided by E298, R319, H348, and E375.

Belongs to the mandelate racemase/muconate lactonizing enzyme family. GalD subfamily.

In terms of biological role, has no detectable activity with D-mannonate and with a panel of 70 other acid sugars (in vitro), in spite of the conservation of the residues that are expected to be important for catalytic activity and cofactor binding. May have evolved a divergent function. The sequence is that of D-galactonate dehydratase family member SSBG_02010 from Streptomyces sp. (strain SPB074).